Consider the following 333-residue polypeptide: MVSKSRWKLLAMLALVLVVMVWYSISREDRYIELFYFPIPEKKEPCLQGEAESKASKLFGNYSRDQPIFLRLEDYFWVKTPSAYELPYGTKGSEDLLLRVLAITSSSIPKNIQSLRCRRCVVVGNGHRLRNSSLGDAINKYDVVIRLNNAPVAGYEGDVGSKTTMRLFYPESAHFDPKVENNPDTLLVLVAFKAMDFHWIETILSDKKRVRKGFWKQPPLIWDVNPKQIRILNPFFMEIAADKLLSLPMQQPRKIKQKPTTGLLAITLALHLCDLVHIAGFGYPDAYNKKQTIHYYEQITLKSMAGSGHNVSQEALAIKRMLEMGAIKNLTSF.

Topologically, residues 1 to 8 (MVSKSRWK) are cytoplasmic. A helical; Signal-anchor for type II membrane protein transmembrane segment spans residues 9–26 (LLAMLALVLVVMVWYSIS). Over 27 to 333 (REDRYIELFY…MGAIKNLTSF (307 aa)) the chain is Lumenal. Residues Asn61, Asn131, Asn310, and Asn329 are each glycosylated (N-linked (GlcNAc...) asparagine). Cys120 and Cys273 are joined by a disulfide.

Belongs to the glycosyltransferase 29 family. The soluble form derives from the membrane form by proteolytic processing. In terms of tissue distribution, highly expressed in adult placenta, heart and kidney.

It localises to the golgi apparatus. The protein resides in the golgi stack membrane. The protein localises to the secreted. The catalysed reaction is a beta-D-galactosyl-(1-&gt;3)-N-acetyl-beta-D-galactosaminyl derivative + CMP-N-acetyl-beta-neuraminate = an N-acetyl-alpha-neuraminyl-(2-&gt;3)-beta-D-galactosyl-(1-&gt;3)-N-acetyl-beta-D-galactosaminyl derivative + CMP + H(+). It carries out the reaction a beta-D-galactosyl-(1-&gt;3)-N-acetyl-alpha-D-galactosaminyl derivative + CMP-N-acetyl-beta-neuraminate = an N-acetyl-alpha-neuraminyl-(2-&gt;3)-beta-D-galactosyl-(1-&gt;3)-N-acetyl-alpha-D-galactosaminyl derivative + CMP + H(+). It catalyses the reaction a beta-D-galactosyl-(1-&gt;4)-N-acetyl-beta-D-glucosaminyl derivative + CMP-N-acetyl-beta-neuraminate = an N-acetyl-alpha-neuraminyl-(2-&gt;3)-beta-D-galactosyl-(1-&gt;4)-N-acetyl-beta-D-glucosaminyl derivative + CMP + H(+). The enzyme catalyses a ganglioside GM1 (d18:1(4E)) + CMP-N-acetyl-beta-neuraminate = a ganglioside GD1a (d18:1(4E)) + CMP + H(+). The catalysed reaction is a ganglioside GA1 (d18:1(4E)) + CMP-N-acetyl-beta-neuraminate = a ganglioside GM1b (d18:1(4E)) + CMP + H(+). It carries out the reaction a ganglioside GT1c (d18:1(4E)) + CMP-N-acetyl-beta-neuraminate = a ganglioside GQ1c (d18:1(4E)) + CMP + H(+). It catalyses the reaction a neolactoside nLc4Cer + CMP-N-acetyl-beta-neuraminate = a neolactoside IV(3)-alpha-NeuAc-nLc4Cer + CMP + H(+). The enzyme catalyses a neolactoside nLc4Cer(d18:1(4E)) + CMP-N-acetyl-beta-neuraminate = a neolactoside IV(3)-alpha-NeuAc-nLc4Cer(d18:1(4E)) + CMP + H(+). The protein operates within protein modification; protein glycosylation. It functions in the pathway glycolipid biosynthesis. In terms of biological role, a beta-galactoside alpha2-3 sialyltransferase involved in terminal sialylation of glycoproteins and glycolipids. Catalyzes the transfer of sialic acid (N-acetyl-neuraminic acid; Neu5Ac) from the nucleotide sugar donor CMP-Neu5Ac onto acceptor Galbeta-(1-&gt;3)-GalNAc- and Galbeta-(1-&gt;4)-GlcNAc-terminated glycoconjugates through an alpha2-3 linkage. Plays a major role in hemostasis. Responsible for sialylation of plasma VWF/von Willebrand factor, preventing its recognition by asialoglycoprotein receptors (ASGPR) and subsequent clearance. Regulates ASGPR-mediated clearance of platelets. Participates in the biosynthesis of the sialyl Lewis X epitopes, both on O- and N-glycans, which are recognized by SELE/E-selectin, SELP/P-selectin and SELL/L-selectin. Essential for selectin-mediated rolling and adhesion of leukocytes during extravasation. Contributes to adhesion and transendothelial migration of neutrophils likely through terminal sialylation of CXCR2. In glycosphingolipid biosynthesis, sialylates GM1 and GA1 gangliosides to form GD1a and GM1b, respectively. Metabolizes brain c-series ganglioside GT1c forming GQ1c. Synthesizes ganglioside LM1 (IV3Neu5Ac-nLc4Cer), a major structural component of peripheral nerve myelin. This is CMP-N-acetylneuraminate-beta-galactosamide-alpha-2,3-sialyltransferase 4 (ST3GAL4) from Homo sapiens (Human).